A 195-amino-acid chain; its full sequence is Protein hunchback (195 aa).

Disordered stretches follow at residues 16-57, 64-83, and 155-195; these read SHHH…SHTN, LKQQQQQQQQHQHQQQQQPM, and LTPP…KYMA. Positions 17–29 are enriched in basic residues; that stretch reads HHHHHHHAHHSHH. Composition is skewed to low complexity over residues 33–44 and 66–81; these read SNSNSNASSPHQ and QQQQQQQQHQHQQQQQ. The segment covering 176 to 195 has biased composition (basic and acidic residues); the sequence is EPEKEHDLMSNSSEDMKYMA.

It belongs to the hunchback C2H2-type zinc-finger protein family.

The protein resides in the nucleus. Functionally, gap class segmentation protein that controls development of head structures. The polypeptide is Protein hunchback (hb) (Drosophila dasycnemia (Fruit fly)).